Here is a 249-residue protein sequence, read N- to C-terminus: DNA repair protein RecO (249 aa).

This sequence belongs to the RecO family.

Involved in DNA repair and RecF pathway recombination. The sequence is that of DNA repair protein RecO from Afipia carboxidovorans (strain ATCC 49405 / DSM 1227 / KCTC 32145 / OM5) (Oligotropha carboxidovorans).